Consider the following 450-residue polypeptide: MIHPIQFTLTNHDGTLLFCVIKNTIFAYKTNGEDGHLDLAGEWVDDYDSAELIKAKVEKEQQRRLAENAAKKLKTNEGEAIERPGNQRRVPLPGKDPKVPVPGPGAPPVYQYIRCLQLSHDEKMLVACTDSDKAAVFFRIELHKDNCLTLFKRQPFPKRPNAVTFADDDAKLLLADKFGDVYAVDSVGEPEKKDPEPILGHVSMLTDIALVTDTKKSYVITADRDEHIKISHYPQSFVIDKWLFGHKEFVSSLCVPEWQSSMLFSAGGDSFIATWDWQKGLLMSSFDYSTIVEPHLTDAHLPPARFLANDGSDRREASISKLLTFKDLPYLVAVPEMTKIVLLLQWDATSGELILSQTLALPLNVVSATVTSANHKLILSLDNREQPGKNFVKIFTLENGKFEEEQAASSSVDEAIVRNLSERPEVQTTVDDIYPLYHVSQLRKRGEHYS.

Positions 69–82 (AAKKLKTNEGEAIE) are enriched in basic and acidic residues. The disordered stretch occupies residues 69-103 (AAKKLKTNEGEAIERPGNQRRVPLPGKDPKVPVPG). 3 WD repeats span residues 108–147 (PVYQ…KDNC), 200–241 (GHVS…VIDK), and 245–285 (GHKE…LMSS).

Belongs to the WD repeat TRM82 family. As to quaternary structure, forms a heterodimer with the catalytic subunit TRM8.

Its subcellular location is the nucleus. The protein operates within tRNA modification; N(7)-methylguanine-tRNA biosynthesis. In terms of biological role, required for the formation of N(7)-methylguanine at position 46 (m7G46) in tRNA. In the complex, it is required to stabilize and induce conformational changes of the catalytic subunit. In Eremothecium gossypii (strain ATCC 10895 / CBS 109.51 / FGSC 9923 / NRRL Y-1056) (Yeast), this protein is tRNA (guanine-N(7)-)-methyltransferase non-catalytic subunit TRM82.